The following is a 146-amino-acid chain: Hemoglobin subunit beta (146 aa).

Residues 2-146 (HWSAEEKQLI…VAHALARKYH (145 aa)) form the Globin domain. Heme b is bound by residues H63 and H92.

It belongs to the globin family. In terms of assembly, heterotetramer of two alpha chains and two beta chains. In terms of tissue distribution, red blood cells.

Involved in oxygen transport from the lung to the various peripheral tissues. The chain is Hemoglobin subunit beta (HBB) from Phasianus colchicus colchicus (Black-necked pheasant).